We begin with the raw amino-acid sequence, 428 residues long: Trigger factor (428 aa).

Residues 163–248 (GNIAVIDFKG…VKEIKVKELP (86 aa)) form the PPIase FKBP-type domain.

It belongs to the FKBP-type PPIase family. Tig subfamily.

The protein localises to the cytoplasm. It carries out the reaction [protein]-peptidylproline (omega=180) = [protein]-peptidylproline (omega=0). Functionally, involved in protein export. Acts as a chaperone by maintaining the newly synthesized protein in an open conformation. Functions as a peptidyl-prolyl cis-trans isomerase. This chain is Trigger factor, found in Clostridium perfringens (strain ATCC 13124 / DSM 756 / JCM 1290 / NCIMB 6125 / NCTC 8237 / Type A).